The following is a 514-amino-acid chain: 2,3-bisphosphoglycerate-independent phosphoglycerate mutase (514 aa).

Positions 14 and 64 each coordinate Mn(2+). The active-site Phosphoserine intermediate is Ser64. Substrate contacts are provided by residues His125, 155-156, Arg187, Arg193, 263-266, and Lys336; these read RD and RADR. Mn(2+)-binding residues include Asp403, His407, Asp444, His445, and His463.

This sequence belongs to the BPG-independent phosphoglycerate mutase family. In terms of assembly, monomer. The cofactor is Mn(2+).

The enzyme catalyses (2R)-2-phosphoglycerate = (2R)-3-phosphoglycerate. It participates in carbohydrate degradation; glycolysis; pyruvate from D-glyceraldehyde 3-phosphate: step 3/5. Catalyzes the interconversion of 2-phosphoglycerate and 3-phosphoglycerate. This chain is 2,3-bisphosphoglycerate-independent phosphoglycerate mutase, found in Salmonella paratyphi B (strain ATCC BAA-1250 / SPB7).